The sequence spans 348 residues: Phenylalanine--tRNA ligase alpha subunit (348 aa).

Mg(2+) is bound at residue Glu259.

This sequence belongs to the class-II aminoacyl-tRNA synthetase family. Phe-tRNA synthetase alpha subunit type 1 subfamily. As to quaternary structure, tetramer of two alpha and two beta subunits. Mg(2+) serves as cofactor.

Its subcellular location is the cytoplasm. The catalysed reaction is tRNA(Phe) + L-phenylalanine + ATP = L-phenylalanyl-tRNA(Phe) + AMP + diphosphate + H(+). In Lacticaseibacillus casei (strain BL23) (Lactobacillus casei), this protein is Phenylalanine--tRNA ligase alpha subunit.